The sequence spans 172 residues: Myosin regulatory light polypeptide 9 (172 aa).

Basic residues predominate over residues 1 to 16 (MSSKRAKTKTTKKRPQ). A disordered region spans residues 1 to 20 (MSSKRAKTKTTKKRPQRATS). Position 2 is an N-acetylserine (S2). T19 carries the phosphothreonine; by MLCK, CIT and ROCK2 modification. The residue at position 20 (S20) is a Phosphoserine; by CDC42BP, CIT, MLCK, PAK1, ROCK1, ROCK2, DAPK1, DAPK2 and ZIPK/DAPK3. EF-hand domains are found at residues 29–64 (SQIQ…LGKN), 98–133 (DPED…MGDR), and 134–169 (FTDE…GAKD). D42, N44, D46, and D53 together coordinate Ca(2+).

In terms of assembly, myosin is a hexamer of 2 heavy chains and 4 light chains: interacts with myosin heavy chain MYO19. Interacts with LUZP1; the interaction results in inhibition of phosphorylation of MYL9 by DAPK3. Post-translationally, phosphorylation increases the actin-activated myosin ATPase activity and thereby regulates the contractile activity. It is required to generate the driving force in the migration of the cells but not necessary for localization of myosin-2 at the leading edge. Phosphorylation is required for myotube formation. Phosphorylated by DAPK3; DAPK3-mediated phosphorylation is inhibited by LUZP1.

It is found in the cytoplasm. The protein localises to the cytoskeleton. The protein resides in the cell cortex. Its function is as follows. Myosin regulatory subunit that plays an important role in regulation of both smooth muscle and nonmuscle cell contractile activity via its phosphorylation. Implicated in cytokinesis, receptor capping, and cell locomotion. In myoblasts, may regulate PIEZO1-dependent cortical actomyosin assembly involved in myotube formation. This is Myosin regulatory light polypeptide 9 (MYL9) from Bos taurus (Bovine).